Consider the following 477-residue polypeptide: 3-isopropylmalate dehydratase large subunit (477 aa).

Positions 352, 413, and 416 each coordinate [4Fe-4S] cluster.

This sequence belongs to the aconitase/IPM isomerase family. LeuC type 1 subfamily. Heterodimer of LeuC and LeuD. [4Fe-4S] cluster serves as cofactor.

The catalysed reaction is (2R,3S)-3-isopropylmalate = (2S)-2-isopropylmalate. The protein operates within amino-acid biosynthesis; L-leucine biosynthesis; L-leucine from 3-methyl-2-oxobutanoate: step 2/4. Functionally, catalyzes the isomerization between 2-isopropylmalate and 3-isopropylmalate, via the formation of 2-isopropylmaleate. The sequence is that of 3-isopropylmalate dehydratase large subunit from Pseudomonas putida (strain ATCC 47054 / DSM 6125 / CFBP 8728 / NCIMB 11950 / KT2440).